A 354-amino-acid polypeptide reads, in one-letter code: Glutamine synthetase (354 aa).

The 80-residue stretch at 22-101 (VQAEYVWIDG…VLAETFNNDG (80 aa)) folds into the GS beta-grasp domain. One can recognise a GS catalytic domain in the interval 108 to 354 (HRHHTKKVMD…IIVETTVLDK (247 aa)).

This sequence belongs to the glutamine synthetase family. As to quaternary structure, homooctamer.

It localises to the cytoplasm. It catalyses the reaction L-glutamate + NH4(+) + ATP = L-glutamine + ADP + phosphate + H(+). The sequence is that of Glutamine synthetase (GLNA) from Suillus bovinus (Jersey cow bolete).